The sequence spans 52 residues: Proteinase inhibitor PSI-1.2 (52 aa).

4 cysteine pairs are disulfide-bonded: cysteine 3–cysteine 32, cysteine 7–cysteine 28, cysteine 16–cysteine 38, and cysteine 31–cysteine 49.

In terms of biological role, potent inhibitor of trypsin and a weaker inhibitor of chymotrypsin. It does not inhibit elastase and subtilisin DY. In Capsicum annuum (Capsicum pepper), this protein is Proteinase inhibitor PSI-1.2.